The following is a 163-amino-acid chain: Nucleotide-binding protein tll0793 (163 aa).

The protein belongs to the YajQ family.

Functionally, nucleotide-binding protein. In Thermosynechococcus vestitus (strain NIES-2133 / IAM M-273 / BP-1), this protein is Nucleotide-binding protein tll0793.